The sequence spans 150 residues: Protein SprT-like (150 aa).

A SprT-like domain is found at 11 to 149; it reads ELVDKLSLTY…CGKCRGSLKE (139 aa). Residue histidine 70 participates in Zn(2+) binding. Residue glutamate 71 is part of the active site. Histidine 74 serves as a coordination point for Zn(2+).

The protein belongs to the SprT family. Zn(2+) is required as a cofactor.

The protein localises to the cytoplasm. This Oceanobacillus iheyensis (strain DSM 14371 / CIP 107618 / JCM 11309 / KCTC 3954 / HTE831) protein is Protein SprT-like.